Reading from the N-terminus, the 532-residue chain is Protoporphyrinogen oxidase (532 aa).

FAD-binding positions include 9 to 14, Ile289, and 511 to 513; these read GSGISG and VGI.

Belongs to the protoporphyrinogen/coproporphyrinogen oxidase family. Protoporphyrinogen oxidase subfamily. Requires FAD as cofactor.

It localises to the mitochondrion. The enzyme catalyses protoporphyrinogen IX + 3 O2 = protoporphyrin IX + 3 H2O2. The protein operates within porphyrin-containing compound metabolism; protoporphyrin-IX biosynthesis; protoporphyrin-IX from protoporphyrinogen-IX: step 1/1. Functionally, catalyzes the 6-electron oxidation of protoporphyrinogen-IX to form protoporphyrin-IX. In Dictyostelium discoideum (Social amoeba), this protein is Protoporphyrinogen oxidase (ppox).